A 189-amino-acid chain; its full sequence is Cyclin-dependent kinase inhibitor 5 (189 aa).

Polar residues predominate over residues 73–93 (KQQKQQLIPSVNQCQTKNPRA). The interval 73 to 107 (KQQKQQLIPSVNQCQTKNPRASSGPAKKLEPDTTT) is disordered.

This sequence belongs to the CDI family. ICK/KRP subfamily. Interacts with CYCD4-1. Does not interact with CDKA-1. As to expression, expressed in flowers and at lower levels in roots and leaves.

Its subcellular location is the nucleus. The protein resides in the nucleoplasm. In terms of biological role, inhibits CYCD2-1/CDKA-1 complex kinase activity without interaction with the complex. The protein is Cyclin-dependent kinase inhibitor 5 (KRP5) of Arabidopsis thaliana (Mouse-ear cress).